The chain runs to 212 residues: Large ribosomal subunit protein bL25 (212 aa).

The protein belongs to the bacterial ribosomal protein bL25 family. CTC subfamily. As to quaternary structure, part of the 50S ribosomal subunit; part of the 5S rRNA/L5/L18/L25 subcomplex. Contacts the 5S rRNA. Binds to the 5S rRNA independently of L5 and L18.

In terms of biological role, this is one of the proteins that binds to the 5S RNA in the ribosome where it forms part of the central protuberance. The protein is Large ribosomal subunit protein bL25 of Leptospira interrogans serogroup Icterohaemorrhagiae serovar copenhageni (strain Fiocruz L1-130).